The following is a 763-amino-acid chain: Phosphoglycerol transferase I (763 aa).

Helical transmembrane passes span 4 to 19 (LLSF…IYAW), 26 to 48 (WWFA…LFAS), 76 to 98 (YILP…GWIL), and 105 to 127 (PHHF…ASPA).

The protein belongs to the OpgB family.

It localises to the cell inner membrane. The catalysed reaction is a phosphatidylglycerol + a membrane-derived-oligosaccharide D-glucose = a 1,2-diacyl-sn-glycerol + a membrane-derived-oligosaccharide 6-(glycerophospho)-D-glucose.. The protein operates within glycan metabolism; osmoregulated periplasmic glucan (OPG) biosynthesis. Its function is as follows. Transfers a phosphoglycerol residue from phosphatidylglycerol to the membrane-bound nascent glucan backbones. This is Phosphoglycerol transferase I from Shigella flexneri.